A 264-amino-acid polypeptide reads, in one-letter code: Thymidylate synthase (264 aa).

Arginine 21 contacts dUMP. A (6R)-5,10-methylene-5,6,7,8-tetrahydrofolate-binding site is contributed by histidine 51. Position 126-127 (126-127 (RR)) interacts with dUMP. Cysteine 146 functions as the Nucleophile in the catalytic mechanism. DUMP contacts are provided by residues 166–169 (RSCD), asparagine 177, and 207–209 (HLY). Aspartate 169 provides a ligand contact to (6R)-5,10-methylene-5,6,7,8-tetrahydrofolate. Alanine 263 provides a ligand contact to (6R)-5,10-methylene-5,6,7,8-tetrahydrofolate.

It belongs to the thymidylate synthase family. Bacterial-type ThyA subfamily. In terms of assembly, homodimer.

Its subcellular location is the cytoplasm. The enzyme catalyses dUMP + (6R)-5,10-methylene-5,6,7,8-tetrahydrofolate = 7,8-dihydrofolate + dTMP. It functions in the pathway pyrimidine metabolism; dTTP biosynthesis. Catalyzes the reductive methylation of 2'-deoxyuridine-5'-monophosphate (dUMP) to 2'-deoxythymidine-5'-monophosphate (dTMP) while utilizing 5,10-methylenetetrahydrofolate (mTHF) as the methyl donor and reductant in the reaction, yielding dihydrofolate (DHF) as a by-product. This enzymatic reaction provides an intracellular de novo source of dTMP, an essential precursor for DNA biosynthesis. In Salmonella typhi, this protein is Thymidylate synthase.